Reading from the N-terminus, the 698-residue chain is tRNA (guanine(37)-N(1))-methyltransferase (698 aa).

Positions 233–254 are disordered; the sequence is DSTAHDSVQRNEGKTPKGPLDG. Positions 234–247 are enriched in basic and acidic residues; it reads STAHDSVQRNEGKT. Residues arginine 394, 432–433, and 459–460 contribute to the S-adenosyl-L-methionine site; these read DI and DA. Disordered regions lie at residues 500-522 and 534-582; these read PDQN…GHVD and KKKL…DAPR. Composition is skewed to basic and acidic residues over residues 513–522, 539–550, and 569–582; these read RESDRVGHVD, HADTNDPLEERP, and TNND…DAPR. Residue asparagine 603 participates in S-adenosyl-L-methionine binding.

The protein belongs to the class I-like SAM-binding methyltransferase superfamily. TRM5/TYW2 family. As to quaternary structure, monomer.

It localises to the mitochondrion matrix. It is found in the nucleus. The protein resides in the cytoplasm. The enzyme catalyses guanosine(37) in tRNA + S-adenosyl-L-methionine = N(1)-methylguanosine(37) in tRNA + S-adenosyl-L-homocysteine + H(+). In terms of biological role, specifically methylates the N1 position of guanosine-37 in various cytoplasmic and mitochondrial tRNAs. Methylation is not dependent on the nature of the nucleoside 5' of the target nucleoside. This is the first step in the biosynthesis of wybutosine (yW), a modified base adjacent to the anticodon of tRNAs and required for accurate decoding. In Plasmodium knowlesi (strain H), this protein is tRNA (guanine(37)-N(1))-methyltransferase.